The primary structure comprises 337 residues: LIX1-like protein (337 aa).

Residues 1-64 are disordered; that stretch reads METMRAQRLQ…PLLLSGAPGL (64 aa). The span at 26-38 shows a compositional bias: low complexity; the sequence is PGVTGAAAATATP. Over residues 39–56 the composition is skewed to pro residues; it reads PAGPPPAPPPPAPPPPPL.

Belongs to the LIX1 family.

The polypeptide is LIX1-like protein (LIX1L) (Homo sapiens (Human)).